A 410-amino-acid chain; its full sequence is Sporulation killing factor maturation protein SkfB (410 aa).

The region spanning 103–314 (SYLPISCTLQ…LREARHKWGD (212 aa)) is the Radical SAM core domain. Residues Cys117, Cys121, Cys124, Cys380, Cys385, and Cys387 each contribute to the [4Fe-4S] cluster site.

The protein belongs to the radical SAM superfamily. [4Fe-4S] cluster serves as cofactor.

The protein resides in the cytoplasm. Catalyzes the formation of the thioether bond required for production of the sporulation killing factor (SKF) from SkfA. Forms the cysteine-methionine thioether bond found in SKF; the acceptor amino acid can be hydrophobic, aromatic or a small hydrophilic amino acid but not a larger hydrophilic amino acid, i.e. Met=Ala, Phe, Leu, Tyr&gt;Asn, Ser&gt;&gt;Gln, Glu, Lys. The relative position of Cys and Met in the substrate cannot be inverted, in vitro the thioether bond cannot be made in the absence of the SkfA propeptide, suggesting this is the first reaction in SKF maturation. In vitro, in the absence of a second substrate, cleaves S-adenosyl-L-methionine into Met and 5'-dA. The protein is Sporulation killing factor maturation protein SkfB of Bacillus subtilis (strain 168).